We begin with the raw amino-acid sequence, 349 residues long: Insulin gene enhancer protein ISL-1 (349 aa).

LIM zinc-binding domains lie at 17-70 (CVGC…CKRD) and 79-133 (CAKC…RADH). A DNA-binding region (homeobox) is located at residues 181-240 (TTRVRTVLNEKQLHTLRTCYAANPRPDALMKEQLVEMTGLSPRVIRVWFQNKRCKDKKRS). Residues 262-291 (GTPMVAASPERHDGGLQANPVEVQSYQPPW) are LIM-binding domain (LID). The segment at 312 to 349 (VNFSEGGPGSNSTGSEVASMSSQLPDTPNSMVASPIEA) is disordered. Residues 321 to 343 (SNSTGSEVASMSSQLPDTPNSMV) show a composition bias toward polar residues.

In terms of assembly, at neuronal promoters, displaces LDB1 from LHX3 LIM domain to form a ternary complex in which ISL1 contacts both LHX3 and LDB1; allosteric structural changes in the DNA binding domain of LHX3, induced by the ISL1:LHX3 interaction, may explain differences in sequence specificity of the different complexes. Interacts with LHX3. Interacts (via C-terminus) with POU4F2 (via C-terminus) isoform 1. Interacts with POU3F2. Interacts with POU4F3. Interacts (via N-terminal domain) with MLIP; the interaction represses ISL1 transactivator activity. Interacts with GCN5/KAT2A. Interactions of ISL1 with MLIP1 or KAT2A may be mutually exclusive. Ubiquitinated probably by WWP1 E3 ubiquitin ligase; ubiquitination is followed by protein degradation. Post-translationally, phosphorylated. Expressed in subsets of neurons of the adrenal medulla and dorsal root ganglion, inner nuclear and ganglion cell layers in the retina, the pineal and some regions of the brain.

Its subcellular location is the nucleus. In terms of biological role, DNA-binding transcriptional activator. Recognizes and binds to the consensus octamer binding site 5'-ATAATTAA-3' in promoter of target genes. Plays a fundamental role in the gene regulatory network essential for retinal ganglion cell (RGC) differentiation. Cooperates with the transcription factor POU4F2 to achieve maximal levels of expression of RGC target genes and RGC fate specification in the developing retina. Involved in the specification of motor neurons in cooperation with LHX3 and LDB1. Binds to insulin gene enhancer sequences. Essential for heart development. Marker of one progenitor cell population that give rise to the outflow tract, right ventricle, a subset of left ventricular cells, and a large number of atrial cells as well, its function is required for these progenitors to contribute to the heart. Controls the expression of FGF and BMP growth factors in this cell population and is required for proliferation and survival of cells within pharyngeal foregut endoderm and adjacent splanchnic mesoderm as well as for migration of cardiac progenitors into the heart. This chain is Insulin gene enhancer protein ISL-1 (ISL1), found in Homo sapiens (Human).